A 348-amino-acid polypeptide reads, in one-letter code: Protein pelota homolog (348 aa).

Belongs to the eukaryotic release factor 1 family. Pelota subfamily. Monomer. A divalent metal cation serves as cofactor.

The protein resides in the cytoplasm. In terms of biological role, may function in recognizing stalled ribosomes, interact with stem-loop structures in stalled mRNA molecules, and effect endonucleolytic cleavage of the mRNA. May play a role in the release non-functional ribosomes and degradation of damaged mRNAs. Has endoribonuclease activity. The polypeptide is Protein pelota homolog (Methanococcus maripaludis (strain C6 / ATCC BAA-1332)).